The primary structure comprises 178 residues: Large ribosomal subunit protein uL6 (178 aa).

This sequence belongs to the universal ribosomal protein uL6 family. As to quaternary structure, part of the 50S ribosomal subunit.

Functionally, this protein binds to the 23S rRNA, and is important in its secondary structure. It is located near the subunit interface in the base of the L7/L12 stalk, and near the tRNA binding site of the peptidyltransferase center. The chain is Large ribosomal subunit protein uL6 from Corynebacterium aurimucosum (strain ATCC 700975 / DSM 44827 / CIP 107346 / CN-1) (Corynebacterium nigricans).